The sequence spans 193 residues: MVATGSLSSKNPASISELLDGGYHPGSLLSDFDYWDYVVPEPNLNEVVFEETTCQNLVKMLENCLSRSKQTKLGCSKVLVPEKLTQRIAQDVLRLSSTEPCGLRGCVMHVNLEIENVCKKLDRIVCDASVVPTFELTLVFKQESCPWTSLKDFFFSRGRFSSGLKRTLILSSGFRLVKKKLYSLIGTTVIEEC.

It belongs to the DDIT4 family.

The protein localises to the cytoplasm. Inhibits cell growth by regulating the TOR signaling pathway upstream of the TSC1-TSC2 complex and downstream of AKT1. This Mus musculus (Mouse) protein is DNA damage-inducible transcript 4-like protein (Ddit4l).